Consider the following 724-residue polypeptide: Phenylalanine ammonia-lyase (724 aa).

The active-site Proton donor/acceptor is tyrosine 91. Residues 205-207 constitute a cross-link (5-imidazolinone (Ala-Gly)); the sequence is ASG. The residue at position 206 (serine 206) is a 2,3-didehydroalanine (Ser). Residues asparagine 265, glutamine 357, arginine 363, asparagine 393, lysine 467, glutamate 495, and asparagine 498 each coordinate (E)-cinnamate.

Belongs to the PAL/histidase family. As to quaternary structure, homotetramer. Contains an active site 4-methylidene-imidazol-5-one (MIO), which is formed autocatalytically by cyclization and dehydration of residues Ala-Ser-Gly.

Its subcellular location is the cytoplasm. It carries out the reaction L-phenylalanine = (E)-cinnamate + NH4(+). It functions in the pathway phenylpropanoid metabolism; trans-cinnamate biosynthesis; trans-cinnamate from L-phenylalanine: step 1/1. In terms of biological role, catalyzes the non-oxidative deamination of L-phenylalanine to form trans-cinnamic acid and a free ammonium ion. Facilitates the commitment step in phenylpropanoid pathways that produce secondary metabolites such as lignins, coumarins and flavonoids. The sequence is that of Phenylalanine ammonia-lyase (PAL1) from Mycosarcoma maydis (Corn smut fungus).